Consider the following 243-residue polypeptide: Peptidyl-tRNA hydrolase (243 aa).

Residue Tyr14 participates in tRNA binding. His19 acts as the Proton acceptor in catalysis. Residues Tyr64, Asn66, and Asn112 each coordinate tRNA. A compositionally biased stretch (basic and acidic residues) spans 190 to 207 (KAEEEKPRKEGKDGEKKP). The interval 190-243 (KAEEEKPRKEGKDGEKKPAGQSHIRQARSSNQPKLPATGPMAEMLKKMFGNKGE) is disordered. Positions 212-222 (HIRQARSSNQP) are enriched in polar residues.

The protein belongs to the PTH family. In terms of assembly, monomer.

The protein resides in the cytoplasm. It carries out the reaction an N-acyl-L-alpha-aminoacyl-tRNA + H2O = an N-acyl-L-amino acid + a tRNA + H(+). Functionally, hydrolyzes ribosome-free peptidyl-tRNAs (with 1 or more amino acids incorporated), which drop off the ribosome during protein synthesis, or as a result of ribosome stalling. Its function is as follows. Catalyzes the release of premature peptidyl moieties from peptidyl-tRNA molecules trapped in stalled 50S ribosomal subunits, and thus maintains levels of free tRNAs and 50S ribosomes. In Rhizobium etli (strain CIAT 652), this protein is Peptidyl-tRNA hydrolase.